Reading from the N-terminus, the 98-residue chain is Class II hydrophobin 3 (98 aa).

Residues Met-1–Ala-18 form the signal peptide. N-linked (GlcNAc...) asparagine glycosylation is found at Asn-26 and Asn-54. 4 disulfides stabilise this stretch: Cys-35–Cys-83, Cys-44–Cys-74, Cys-45–Cys-57, and Cys-84–Cys-95.

Belongs to the cerato-ulmin hydrophobin family.

It is found in the secreted. The protein localises to the cell wall. In terms of biological role, aerial growth, conidiation, and dispersal of filamentous fungi in the environment rely upon a capability of their secreting small amphipathic proteins called hydrophobins (HPBs) with low sequence identity. Class I can self-assemble into an outermost layer of rodlet bundles on aerial cell surfaces, conferring cellular hydrophobicity that supports fungal growth, development and dispersal; whereas Class II form highly ordered films at water-air interfaces through intermolecular interactions but contribute nothing to the rodlet structure. In Botryotinia fuckeliana, hydrophobins are not involved in conferring surface hydrophobicity to conidia and aerial hyphae and their function in sclerotia and fruiting bodies remains to be investigated. This Botryotinia fuckeliana (strain B05.10) (Noble rot fungus) protein is Class II hydrophobin 3.